We begin with the raw amino-acid sequence, 324 residues long: 4-hydroxyphenylpyruvate 3-dimethylallyltransferase (324 aa).

Substrate contacts are provided by arginine 160 and glutamate 281.

This sequence belongs to the aromatic prenyltransferase family. Monomer.

The enzyme catalyses 3-(4-hydroxyphenyl)pyruvate + dimethylallyl diphosphate = 3-dimethylallyl-4-hydroxyphenylpyruvate + diphosphate. The protein operates within antibiotic biosynthesis. In terms of biological role, magnesium-independent aromatic prenyltransferase that catalyzes the irreversible transfer of a dimethylallyl group to 4-hydroxyphenylpyruvate to produce the ring A structure in the clorobiocin biosynthesis pathway. Clorobiocin is an aminocoumarin family antibiotic. The polypeptide is 4-hydroxyphenylpyruvate 3-dimethylallyltransferase (Streptomyces roseochromogenus subsp. oscitans).